The chain runs to 406 residues: Phosphopentomutase (406 aa).

Aspartate 10, aspartate 305, histidine 310, aspartate 346, histidine 347, and histidine 358 together coordinate Mn(2+).

This sequence belongs to the phosphopentomutase family. The cofactor is Mn(2+).

It is found in the cytoplasm. The catalysed reaction is 2-deoxy-alpha-D-ribose 1-phosphate = 2-deoxy-D-ribose 5-phosphate. It carries out the reaction alpha-D-ribose 1-phosphate = D-ribose 5-phosphate. It participates in carbohydrate degradation; 2-deoxy-D-ribose 1-phosphate degradation; D-glyceraldehyde 3-phosphate and acetaldehyde from 2-deoxy-alpha-D-ribose 1-phosphate: step 1/2. Its function is as follows. Isomerase that catalyzes the conversion of deoxy-ribose 1-phosphate (dRib-1-P) and ribose 1-phosphate (Rib-1-P) to deoxy-ribose 5-phosphate (dRib-5-P) and ribose 5-phosphate (Rib-5-P), respectively. The polypeptide is Phosphopentomutase (Aliivibrio fischeri (strain MJ11) (Vibrio fischeri)).